Consider the following 980-residue polypeptide: MDYNLYDFLPLYHPVQTPAFDRDVNSLSEFTQYELPREEEFPQNPGDLMLHQKLISNFINPHTLYDGVLLVHEMGTGKTCTSVAVAEEFIKNNYSSGETYPYTMVKKIIVLTKGKGLQNNFVNEIANVCTWGQYLEGLDRYIRNRDKKIKKNVKVHYTFDTFEIFAKNLAKMSTNEKRMTYENSLFIVDEAHNLRLHSDPEEGNIYSEIYDLFHLLKSRKILLLTGTPMKDRPEEIIDLFNLILRTPLSVEDLDQPEQFKRKINGHVSYLRAMISDVDRREMGKKLGSLNHFRVQPVVMGDFQSQIYQLAKAKDDEEKSIFNNSRQSSAMVFPDGTYGKQGFEANILPTTSGHKLKPEIRDELRLNLRKYSAKYADLIDRLKVDYTEGRLSFVFSEFVKGSGLVALGLLLELNGYVKATPSSNFAKPQKRYAIFTNETSTDAQTKQLISAFNNPKNLKGEYISTILGSRVIMEGFSFKNIQSEYILSPHWNYSETSQIIARGLRLGSHNDLKKNNIKFEVRIYHYVSLANKNYPAESIDLHMYEIAEEKDLEIQKILRYIKEAAFDCRLNQQRNTITNRKFDGTRNCEYSSCSYECSNQVDIGHDNRNYRLLYFQSADQYEKLKATIIETASRQPFTIEQIVAETKHSEFEVMTVIESLLNYRKVLFTRPEGYYYLSNIKNLFFASNVVFDRDKHYDSNDPTLLNYYTKYTTVYMGKSIGQLIQENQQKYMVFLVKKIFKSKNLVELQKYMVQLPIYLQEKLLSYSISVRHQDIKNNFVRDMVLNNFKLYYKIQDPQAFIWLNPENFLCTANYRDPDQWKPCTPSQQRDIEYMKRDRANIKVSNNSYGFIGLLNRKTNDFCLKKLQGPTLSDEPTDKRKRNVGKRCQNWKKVDLVDLVANKLKVVPDEDFDFTAEDANTVKNNPKFKKLVTPEMDQNDLKRLAFWNAQDVNHLCRTTLTQFTAQKLVVDDPNCGTANKIR.

Residues 59–246 (INPHTLYDGV…IDLFNLILRT (188 aa)) form the Helicase ATP-binding domain. Residue 72-79 (HEMGTGKT) participates in ATP binding. The DEAH box signature appears at 189–192 (DEAH). A Helicase C-terminal domain is found at 389 to 546 (RLSFVFSEFV…SIDLHMYEIA (158 aa)).

This sequence belongs to the IIV-6 022L family. SNF2/RAD54 helicase subfamily.

The protein is Putative helicase 087L of Invertebrate iridescent virus 3 (IIV-3).